The sequence spans 168 residues: Phosphopantetheine adenylyltransferase (168 aa).

Residue Thr13 participates in substrate binding. Residues 13–14 and His21 each bind ATP; that span reads TF. Lys45, Leu78, and Arg92 together coordinate substrate. ATP contacts are provided by residues 93–95, Glu103, and 128–134; these read GLR and TQFISSS.

It belongs to the bacterial CoaD family. Homohexamer. It depends on Mg(2+) as a cofactor.

It is found in the cytoplasm. It catalyses the reaction (R)-4'-phosphopantetheine + ATP + H(+) = 3'-dephospho-CoA + diphosphate. It participates in cofactor biosynthesis; coenzyme A biosynthesis; CoA from (R)-pantothenate: step 4/5. Functionally, reversibly transfers an adenylyl group from ATP to 4'-phosphopantetheine, yielding dephospho-CoA (dPCoA) and pyrophosphate. The chain is Phosphopantetheine adenylyltransferase from Wolbachia pipientis wMel.